Consider the following 514-residue polypeptide: Glutathione-binding protein GsiB (514 aa).

The N-terminal stretch at 1–27 (MSVMTIQRRWLVAAGVTAAMVASPVWA) is a signal peptide.

This sequence belongs to the bacterial solute-binding protein 5 family. The complex is composed of two ATP-binding proteins (GsiA), two transmembrane proteins (GsiC and GsiD) and a solute-binding protein (GsiB).

The protein resides in the periplasm. Functionally, part of the ABC transporter complex GsiABCD involved in glutathione import. Binds glutathione. The protein is Glutathione-binding protein GsiB of Pectobacterium atrosepticum (strain SCRI 1043 / ATCC BAA-672) (Erwinia carotovora subsp. atroseptica).